Here is a 551-residue protein sequence, read N- to C-terminus: Glucans biosynthesis protein D (551 aa).

Positions 1–32 (MNRRRFLQGSLAMAALSGTTGLSTLFSRAAFA) form a signal peptide, tat-type signal.

The protein belongs to the OpgD/OpgG family. Post-translationally, predicted to be exported by the Tat system. The position of the signal peptide cleavage has not been experimentally proven.

The protein localises to the periplasm. Its pathway is glycan metabolism; osmoregulated periplasmic glucan (OPG) biosynthesis. Probably involved in the control of the structural glucose backbone of osmoregulated periplasmic glucans (OPGs). The chain is Glucans biosynthesis protein D from Enterobacter sp. (strain 638).